The chain runs to 365 residues: Aminomethyltransferase (365 aa).

The protein belongs to the GcvT family. The glycine cleavage system is composed of four proteins: P, T, L and H.

It catalyses the reaction N(6)-[(R)-S(8)-aminomethyldihydrolipoyl]-L-lysyl-[protein] + (6S)-5,6,7,8-tetrahydrofolate = N(6)-[(R)-dihydrolipoyl]-L-lysyl-[protein] + (6R)-5,10-methylene-5,6,7,8-tetrahydrofolate + NH4(+). Its function is as follows. The glycine cleavage system catalyzes the degradation of glycine. This is Aminomethyltransferase from Desulfitobacterium hafniense (strain Y51).